Consider the following 465-residue polypeptide: Adenosine 3'-phospho 5'-phosphosulfate transporter 1 (465 aa).

Helical transmembrane passes span 13 to 33 (LVIC…SDLL), 61 to 81 (FLKL…GFLI), 142 to 162 (AVQL…WGVL), 185 to 205 (QFLV…YLQW), 270 to 290 (SYEY…MSGS), 299 to 319 (VTTL…SFTA), 339 to 359 (GVNL…GGFM), 370 to 390 (KFVF…LFIY), 391 to 407 (HTID…IMTL), and 424 to 444 (ISLL…LRVY).

Belongs to the nucleotide-sugar transporter family. SLC35B subfamily. In terms of tissue distribution, expressed throughout embryogenesis. During oogenesis, it is expressed strongly in the nurse cells of the germline. Maternally expressed at the syncytial blastoderm stage. Zygotically expressed, from after germ-band elongation in the invaginating salivary gland placodes. Remains expressed predominantly in this tissue throughout embryogenesis, but low-level expression may also be present throughout the embryo.

It localises to the golgi apparatus membrane. Functionally, mediates the transport of adenosine 3'-phospho 5'-phosphosulfate (PAPS), from cytosol into Golgi. PAPS is a universal sulfuryl donor for sulfation events that take place in the Golgi. Required for the dorsoventral patterning, suggesting that it mediates the transport of the sulfate donor required for the sulfotransferase activity of pip (pipe). The chain is Adenosine 3'-phospho 5'-phosphosulfate transporter 1 (sll) from Drosophila melanogaster (Fruit fly).